We begin with the raw amino-acid sequence, 256 residues long: uncharacterized protein (256 aa).

Positions 7-62 (PAERQKTLLNLISKQSVISINNLVNILGVSHMTVRRDIQKLEEDGKVISVSGGVQL) constitute an HTH deoR-type domain. Positions 24 to 43 (ISINNLVNILGVSHMTVRRD) form a DNA-binding region, H-T-H motif.

This is an uncharacterized protein from Haemophilus influenzae (strain ATCC 51907 / DSM 11121 / KW20 / Rd).